Here is a 501-residue protein sequence, read N- to C-terminus: Glycerol kinase (501 aa).

Position 12 (threonine 12) interacts with ADP. Residues threonine 12, threonine 13, and serine 14 each coordinate ATP. Threonine 12 serves as a coordination point for sn-glycerol 3-phosphate. An ADP-binding site is contributed by arginine 16. Sn-glycerol 3-phosphate is bound by residues arginine 82, glutamate 83, tyrosine 135, and aspartate 244. Glycerol contacts are provided by arginine 82, glutamate 83, tyrosine 135, aspartate 244, and glutamine 245. 4 residues coordinate ADP: threonine 266, glycine 309, glycine 409, and asparagine 413. 3 residues coordinate ATP: threonine 266, glycine 309, and glycine 409.

The protein belongs to the FGGY kinase family.

It carries out the reaction glycerol + ATP = sn-glycerol 3-phosphate + ADP + H(+). It participates in polyol metabolism; glycerol degradation via glycerol kinase pathway; sn-glycerol 3-phosphate from glycerol: step 1/1. With respect to regulation, inhibited by fructose 1,6-bisphosphate (FBP). In terms of biological role, key enzyme in the regulation of glycerol uptake and metabolism. Catalyzes the phosphorylation of glycerol to yield sn-glycerol 3-phosphate. This Coxiella burnetii (strain RSA 331 / Henzerling II) protein is Glycerol kinase.